Consider the following 89-residue polypeptide: Dolichol-phosphate mannose synthase subunit 3 (89 aa).

2 helical membrane-spanning segments follow: residues 7 to 27 (ILSL…AAII) and 33 to 53 (WLLP…MVGV).

Belongs to the DPM3 family. Component of the dolichol-phosphate mannose (DPM) synthase complex composed of DPMS1, DPMS2 and DPMS3; in the complex interacts directly with DPMS1 and DPMS2.

It localises to the endoplasmic reticulum membrane. It participates in protein modification; protein glycosylation. Its function is as follows. Regulates the biosynthesis of dolichol phosphate-mannose. Regulatory subunit of the dolichol-phosphate mannose (DPM) synthase complex; essential for the ER localization and stable expression of DPMS1. This is Dolichol-phosphate mannose synthase subunit 3 from Arabidopsis thaliana (Mouse-ear cress).